A 196-amino-acid chain; its full sequence is Probable malonic semialdehyde reductase RutE (196 aa).

The protein belongs to the nitroreductase family. HadB/RutE subfamily. FMN is required as a cofactor.

It carries out the reaction 3-hydroxypropanoate + NADP(+) = 3-oxopropanoate + NADPH + H(+). May reduce toxic product malonic semialdehyde to 3-hydroxypropionic acid, which is excreted. This Escherichia coli O157:H7 protein is Probable malonic semialdehyde reductase RutE.